We begin with the raw amino-acid sequence, 211 residues long: MRVRNRKGATELLEANPQYVVLNFLEAKAKWRDLFGNDNPIHVEVGSGKGAFVSGMAKQNPDINYIGIDIQKSVLSYALDKVLEAGVSNIKLLWVDGSDLTDYFEDGEIDRLYLNFSDPWPKKRHEKRRLTYKTFLDTFKRILPENGEIHFKTDNRGLFEYSLVSFSQYGMKLNGVWLDLHASDFEGNVMTEYEQKFSNKGQVIYRVEAEF.

The S-adenosyl-L-methionine site is built by E44, D69, D96, and D118. D118 is an active-site residue. K122 provides a ligand contact to substrate. The segment at 124 to 129 (RHEKRR) is interaction with RNA. Residues D154 and 191–194 (TEYE) contribute to the substrate site.

Belongs to the class I-like SAM-binding methyltransferase superfamily. TrmB family.

The catalysed reaction is guanosine(46) in tRNA + S-adenosyl-L-methionine = N(7)-methylguanosine(46) in tRNA + S-adenosyl-L-homocysteine. It participates in tRNA modification; N(7)-methylguanine-tRNA biosynthesis. Catalyzes the formation of N(7)-methylguanine at position 46 (m7G46) in tRNA. This chain is tRNA (guanine-N(7)-)-methyltransferase, found in Streptococcus pneumoniae (strain CGSP14).